Here is a 793-residue protein sequence, read N- to C-terminus: Coiled-coil domain-containing protein 175 (793 aa).

Coiled-coil stretches lie at residues glutamate 131–leucine 163, lysine 205–glutamate 377, lysine 431–lysine 535, leucine 562–glutamate 679, and leucine 716–serine 745.

The sequence is that of Coiled-coil domain-containing protein 175 (CCDC175) from Homo sapiens (Human).